Consider the following 202-residue polypeptide: NADH-quinone oxidoreductase subunit C (202 aa).

The protein belongs to the complex I 30 kDa subunit family. As to quaternary structure, NDH-1 is composed of 14 different subunits. Subunits NuoB, C, D, E, F, and G constitute the peripheral sector of the complex.

It is found in the cell inner membrane. It carries out the reaction a quinone + NADH + 5 H(+)(in) = a quinol + NAD(+) + 4 H(+)(out). In terms of biological role, NDH-1 shuttles electrons from NADH, via FMN and iron-sulfur (Fe-S) centers, to quinones in the respiratory chain. The immediate electron acceptor for the enzyme in this species is believed to be ubiquinone. Couples the redox reaction to proton translocation (for every two electrons transferred, four hydrogen ions are translocated across the cytoplasmic membrane), and thus conserves the redox energy in a proton gradient. This is NADH-quinone oxidoreductase subunit C from Hyphomonas neptunium (strain ATCC 15444).